Here is a 450-residue protein sequence, read N- to C-terminus: Zinc finger protein 446 (450 aa).

In terms of domain architecture, SCAN box spans 26–108 (RLRFRGFCYQ…ALVEGLQHDP (83 aa)). Residue Lys-130 forms a Glycyl lysine isopeptide (Lys-Gly) (interchain with G-Cter in SUMO2) linkage. Disordered regions lie at residues 130–155 (KTEE…QDTR) and 168–205 (EEPN…SFHP). Ser-137 carries the post-translational modification Phosphoserine. Residues 208-254 (IQEEWGLLDRSQKELYWDAMLEKYGTVVSLGLPPHQPEAQAQSELGM) form the KRAB domain. Ser-218 is modified (phosphoserine). 2 disordered regions span residues 263–331 (RSLR…PRKP) and 354–389 (HTSG…RRSL). Residues 275-286 (PGCPEAQPPQGP) are compositionally biased toward pro residues. The segment covering 287–306 (GPAAWEGLSGAATPAPTVRP) has biased composition (low complexity). Thr-308 is subject to Phosphothreonine. Residue Lys-330 forms a Glycyl lysine isopeptide (Lys-Gly) (interchain with G-Cter in SUMO2) linkage. 3 C2H2-type zinc fingers span residues 332–359 (YTCE…SGPG), 395–422 (YPCE…GQRR), and 423–450 (HFCS…PEVP).

It belongs to the krueppel C2H2-type zinc-finger protein family.

The protein resides in the nucleus. May be involved in transcriptional regulation. The protein is Zinc finger protein 446 (ZNF446) of Homo sapiens (Human).